A 131-amino-acid chain; its full sequence is Major pollen allergen Pla l 1 (131 aa).

Cystine bridges form between cysteine 17–cysteine 86, cysteine 20–cysteine 131, and cysteine 42–cysteine 74. Zn(2+) is bound by residues histidine 21, aspartate 45, aspartate 73, and glutamate 88. N-linked (GlcNAc...) asparagine glycosylation occurs at asparagine 107.

This sequence belongs to the Ole e I family. Post-translationally, exists in two variants: glycosylated and non-glycosylated. Carries a complex, major N-linked glycan, with a alpha-1,3-fucose residue in its structure and probably also a beta-1,2-xylose. The average modification of molecular mass due to glycosylation is approximately 969 Da.

Its subcellular location is the secreted. In Plantago lanceolata (English plantain), this protein is Major pollen allergen Pla l 1.